We begin with the raw amino-acid sequence, 410 residues long: Provicilin (410 aa).

A signal peptide spans 1–15 (MLLAIAFLASVCVSS). A Cupin type-1 1 domain is found at 23 to 181 (FIFKSNRFQT…AFNTNYEEIE (159 aa)). 2 disordered regions span residues 223 to 242 (SKNA…GPFN) and 312 to 331 (QRNE…EEET). The segment covering 225–238 (NAKSSSKKSVSSES) has biased composition (low complexity). Positions 241–409 (FNLRSRNPIY…AFPGSSHEVD (169 aa)) constitute a Cupin type-1 2 domain. N-linked (GlcNAc...) asparagine glycosylation occurs at asparagine 359.

It belongs to the 7S seed storage protein family.

Its subcellular location is the vacuole. It is found in the aleurone grain. Functionally, seed storage protein. In Pisum sativum (Garden pea), this protein is Provicilin.